We begin with the raw amino-acid sequence, 1061 residues long: Calcium-transporting ATPase 4, endoplasmic reticulum-type (1061 aa).

A disordered region spans residues 1-21; it reads MGKGGEDCGNKQTNSSELVKS. Residues 1-70 lie on the Cytoplasmic side of the membrane; it reads MGKGGEDCGN…NELEKPEGTS (70 aa). Residues 71–91 form a helical membrane-spanning segment; it reads IFKLILEQFNDTLVRILLAAA. Over 92 to 115 the chain is Lumenal; sequence VISFVLAFFDGDEGGEMGITAFVE. A helical membrane pass occupies residues 116 to 135; that stretch reads PLVIFLILIVNAIVGIWQET. Topologically, residues 136–278 are cytoplasmic; the sequence is NAEKALEALK…EEDTPLKKKL (143 aa). The helical transmembrane segment at 279 to 298 threads the bilayer; sequence NEFGEVLTMIIGLICALVWL. Topologically, residues 299–327 are lumenal; the sequence is INVKYFLSWEYVDGWPRNFKFSFEKCTYY. A helical transmembrane segment spans residues 328–345; the sequence is FEIAVALAVAAIPEGLPA. 4 residues coordinate Ca(2+): Val336, Ala337, Ile339, and Glu341. Over 346–786 the chain is Cytoplasmic; sequence VITTCLALGT…GEGRSIYNNM (441 aa). Asp383 (4-aspartylphosphate intermediate) is an active-site residue. Mg(2+)-binding residues include Asp731 and Asp735. A helical transmembrane segment spans residues 787-806; it reads KAFIRYMISSNIGEVASIFL. Positions 797 and 800 each coordinate Ca(2+). At 807-816 the chain is on the lumenal side; it reads TAALGIPEGM. Residues 817-837 traverse the membrane as a helical segment; that stretch reads IPVQLLWVNLVTDGPPATALG. The Ca(2+) site is built by Asn825, Thr828, and Asp829. Over 838-857 the chain is Cytoplasmic; that stretch reads FNPPDKDIMKKPPRRSDDSL. Residues 858 to 880 traverse the membrane as a helical segment; sequence ITAWILFRYMVIGLYVGVATVGV. At 881 to 950 the chain is on the lumenal side; sequence FIIWYTHNSF…YFQQGKIKAS (70 aa). The helical transmembrane segment at 951–970 threads the bilayer; it reads TLSLSVLVAIEMFNSLNALS. Ca(2+) is bound at residue Glu961. Residues 971–983 are Cytoplasmic-facing; it reads EDGSLVTMPPWVN. A helical transmembrane segment spans residues 984–1002; sequence PWLLLAMAVSFGLHFVILY. Residues 1003–1017 are Lumenal-facing; the sequence is VPFLAQVFGIVPLSL. The helical transmembrane segment at 1018-1038 threads the bilayer; sequence NEWLLVLAVSLPVILIDEVLK. Over 1039–1061 the chain is Cytoplasmic; it reads FVGRCTSGYRYSPRTPSAKQKEE.

Belongs to the cation transport ATPase (P-type) (TC 3.A.3) family. Type IIA subfamily.

Its subcellular location is the membrane. It catalyses the reaction Ca(2+)(in) + ATP + H2O = Ca(2+)(out) + ADP + phosphate + H(+). Functionally, this magnesium-dependent enzyme catalyzes the hydrolysis of ATP coupled with the translocation of calcium from the cytosol to an endomembrane compartment. The chain is Calcium-transporting ATPase 4, endoplasmic reticulum-type (ECA4) from Arabidopsis thaliana (Mouse-ear cress).